We begin with the raw amino-acid sequence, 607 residues long: Protein PLASTID MOVEMENT IMPAIRED 2 (607 aa).

Coiled-coil stretches lie at residues K66 to L295 and M329 to R445.

Belongs to the WEB family. Interacts with WEB1. In terms of tissue distribution, ubiquitous but preferentially in chloroplast-containing tissues.

Its subcellular location is the cytoplasm. Functionally, required for the chloroplast avoidance response under high intensity blue light. This avoidance response consists in the relocation of chloroplasts on the anticlinal side of exposed cells. Acts in association with WEB1 to maintain the velocity of chloroplast photorelocation movement via cp-actin filaments regulation. The polypeptide is Protein PLASTID MOVEMENT IMPAIRED 2 (PMI2) (Arabidopsis thaliana (Mouse-ear cress)).